The primary structure comprises 176 residues: ATP-dependent protease subunit HslV (176 aa).

Thr-6 is a catalytic residue. Na(+) contacts are provided by Ser-161, Cys-164, and Thr-167.

It belongs to the peptidase T1B family. HslV subfamily. As to quaternary structure, a double ring-shaped homohexamer of HslV is capped on each side by a ring-shaped HslU homohexamer. The assembly of the HslU/HslV complex is dependent on binding of ATP.

It localises to the cytoplasm. The enzyme catalyses ATP-dependent cleavage of peptide bonds with broad specificity.. With respect to regulation, allosterically activated by HslU binding. In terms of biological role, protease subunit of a proteasome-like degradation complex believed to be a general protein degrading machinery. This is ATP-dependent protease subunit HslV from Pseudothermotoga lettingae (strain ATCC BAA-301 / DSM 14385 / NBRC 107922 / TMO) (Thermotoga lettingae).